Here is a 140-residue protein sequence, read N- to C-terminus: L-fucose mutarotase (140 aa).

The active-site Proton donor is the His-22. Residues Asp-30, Arg-107, and 129-131 each bind substrate; that span reads YGN.

The protein belongs to the RbsD / FucU family. FucU mutarotase subfamily. As to quaternary structure, homodecamer.

Its subcellular location is the cytoplasm. The enzyme catalyses alpha-L-fucose = beta-L-fucose. It functions in the pathway carbohydrate metabolism; L-fucose metabolism. Its function is as follows. Involved in the anomeric conversion of L-fucose. The polypeptide is L-fucose mutarotase (Citrobacter koseri (strain ATCC BAA-895 / CDC 4225-83 / SGSC4696)).